Consider the following 36-residue polypeptide: Mu-agatoxin-Aa1a (36 aa).

4 cysteine pairs are disulfide-bonded: C2-C17, C9-C22, C16-C32, and C24-C30. N36 carries the asparagine amide modification.

It belongs to the neurotoxin 07 (Beta/delta-agtx) family. 04 (aga-5) subfamily. Expressed by the venom gland.

The protein localises to the secreted. In terms of biological role, insecticidal neurotoxin that induces an irreversible spastic paralysis when injected into insects. Modifies presynaptic voltage-gated sodium channels (Nav), causing them to open at the normal resting potential of the nerve. This leads to spontaneous release of neurotransmitter and repetitive action potentials in motor neurons. In Agelenopsis aperta (North American funnel-web spider), this protein is Mu-agatoxin-Aa1a.